Consider the following 472-residue polypeptide: Argininosuccinate lyase (472 aa).

Belongs to the lyase 1 family. Argininosuccinate lyase subfamily.

It is found in the cytoplasm. It catalyses the reaction 2-(N(omega)-L-arginino)succinate = fumarate + L-arginine. It functions in the pathway amino-acid biosynthesis; L-arginine biosynthesis; L-arginine from L-ornithine and carbamoyl phosphate: step 3/3. This Synechococcus sp. (strain CC9605) protein is Argininosuccinate lyase.